The following is a 274-amino-acid chain: Large ribosomal subunit protein uL2 (274 aa).

The interval 223–274 is disordered; the sequence is VAMNPVDHPHGGGEGRTSGGRHPVTPWGVPTKGYKTRSNKRTDKYIVRRRNK.

It belongs to the universal ribosomal protein uL2 family. In terms of assembly, part of the 50S ribosomal subunit. Forms a bridge to the 30S subunit in the 70S ribosome.

One of the primary rRNA binding proteins. Required for association of the 30S and 50S subunits to form the 70S ribosome, for tRNA binding and peptide bond formation. It has been suggested to have peptidyltransferase activity; this is somewhat controversial. Makes several contacts with the 16S rRNA in the 70S ribosome. The sequence is that of Large ribosomal subunit protein uL2 from Shewanella sp. (strain ANA-3).